Here is a 145-residue protein sequence, read N- to C-terminus: Large ribosomal subunit protein uL16 (145 aa).

Residues 76–95 show a composition bias toward basic and acidic residues; the sequence is PKTKTPAETRMGKGKGEPEH. The segment at 76 to 97 is disordered; the sequence is PKTKTPAETRMGKGKGEPEHFV.

Belongs to the universal ribosomal protein uL16 family. As to quaternary structure, part of the 50S ribosomal subunit.

Binds 23S rRNA and is also seen to make contacts with the A and possibly P site tRNAs. In Salinibacter ruber (strain DSM 13855 / M31), this protein is Large ribosomal subunit protein uL16.